Reading from the N-terminus, the 411-residue chain is 2-acylphloroglucinol 4-prenyltransferase, chloroplastic (411 aa).

A chloroplast-targeting transit peptide spans 1–91 (MELSSVSSFS…CNDQRGNSIR (91 aa)). Transmembrane regions (helical) follow at residues 159–179 (LLGM…NQIF), 198–218 (ISVE…FILI), 226–246 (LLTS…VPPF), 253–273 (ITAF…VYYA), 278–298 (LGLA…ITFM), 333–353 (LLGT…AIIW), 356–376 (AFKS…LIFQ), and 391–411 (KSFY…YLFI).

It belongs to the UbiA prenyltransferase family. The cofactor is Mg(2+). Expressed in glandular trichomes called lupulin glands, and in early stage and mature cones. Detected in leaves, but not in root, stem and first stage of flowers. No expression in male flowers.

It localises to the plastid. The protein resides in the chloroplast membrane. It carries out the reaction a 2-acylphloroglucinol + dimethylallyl diphosphate = a 2-acyl-4-prenylphloroglucinol + diphosphate. It participates in secondary metabolite biosynthesis. In terms of biological role, involved in the biosynthesis of prenylated phenolics natural products which contribute to the bitter taste of beer and display broad biological activities. Catalyzes the first prenylation step in the beta-bitter acid pathway. Abble to transfer dimethylallyl diphosphate (DMAPP) or geranyl diphosphate (GPP) to phlorisovalerophenone (PIVP), phlorisobutrylphenone (PIMP) and naringenin chalcone. Can also use phlorisobutyrophenone (PIBP) and phlormethylbutanophenone (PMBP) as substrates, but not 6'-O-methylated chalcone or naringenin. This Humulus lupulus (European hop) protein is 2-acylphloroglucinol 4-prenyltransferase, chloroplastic.